The primary structure comprises 102 residues: Glutaredoxin-C13 (102 aa).

Positions 1 to 101 (MDKVMRMSSE…PLIKPYQSIL (101 aa)) constitute a Glutaredoxin domain. Residues C21 and C24 are joined by a disulfide bond.

It belongs to the glutaredoxin family. CC-type subfamily.

It localises to the cytoplasm. In terms of biological role, has a glutathione-disulfide oxidoreductase activity in the presence of NADPH and glutathione reductase. Reduces low molecular weight disulfides and proteins. The polypeptide is Glutaredoxin-C13 (GRXC13) (Arabidopsis thaliana (Mouse-ear cress)).